Consider the following 214-residue polypeptide: Outer-membrane lipoprotein LolB (214 aa).

A signal peptide spans 1 to 25 (MNNLKRFTKSIFSCIALSGLLFLGG). The N-palmitoyl cysteine moiety is linked to residue Cys-26. The S-diacylglycerol cysteine moiety is linked to residue Cys-26.

Belongs to the LolB family. In terms of assembly, monomer.

Its subcellular location is the cell outer membrane. In terms of biological role, plays a critical role in the incorporation of lipoproteins in the outer membrane after they are released by the LolA protein. The polypeptide is Outer-membrane lipoprotein LolB (Shewanella sp. (strain MR-4)).